We begin with the raw amino-acid sequence, 477 residues long: Bifunctional protein HldE (477 aa).

The segment at 1–318 is ribokinase; the sequence is MKVNLPAFER…ENAVRGRADT (318 aa). An ATP-binding site is contributed by 195–198; sequence NLSE. Asp264 is a catalytic residue. The cytidylyltransferase stretch occupies residues 344–477; the sequence is MTNGVFDILH…IKKIQTESEK (134 aa).

The protein in the N-terminal section; belongs to the carbohydrate kinase PfkB family. This sequence in the C-terminal section; belongs to the cytidylyltransferase family. As to quaternary structure, homodimer.

The catalysed reaction is D-glycero-beta-D-manno-heptose 7-phosphate + ATP = D-glycero-beta-D-manno-heptose 1,7-bisphosphate + ADP + H(+). It catalyses the reaction D-glycero-beta-D-manno-heptose 1-phosphate + ATP + H(+) = ADP-D-glycero-beta-D-manno-heptose + diphosphate. It functions in the pathway nucleotide-sugar biosynthesis; ADP-L-glycero-beta-D-manno-heptose biosynthesis; ADP-L-glycero-beta-D-manno-heptose from D-glycero-beta-D-manno-heptose 7-phosphate: step 1/4. Its pathway is nucleotide-sugar biosynthesis; ADP-L-glycero-beta-D-manno-heptose biosynthesis; ADP-L-glycero-beta-D-manno-heptose from D-glycero-beta-D-manno-heptose 7-phosphate: step 3/4. In terms of biological role, catalyzes the phosphorylation of D-glycero-D-manno-heptose 7-phosphate at the C-1 position to selectively form D-glycero-beta-D-manno-heptose-1,7-bisphosphate. Functionally, catalyzes the ADP transfer from ATP to D-glycero-beta-D-manno-heptose 1-phosphate, yielding ADP-D-glycero-beta-D-manno-heptose. This is Bifunctional protein HldE from Salmonella agona (strain SL483).